The primary structure comprises 480 residues: Uridine 5'-monophosphate synthase (480 aa).

Ala2 carries the post-translational modification N-acetylalanine. The tract at residues 2–214 (AVARAALGPL…VFVAANHNGS (213 aa)) is OPRTase. Tyr37 carries the post-translational modification Phosphotyrosine. At Ser214 the chain carries Phosphoserine. Positions 215-220 (PLSIKE) are domain linker. The segment at 221 to 480 (APKELSFGAR…WEAYLSRLGV (260 aa)) is OMPdecase. Ser257 contacts orotidine 5'-phosphate. UMP is bound by residues Ser257, Asp259, and 281 to 283 (KTH). Lys281 provides a ligand contact to orotidine 5'-phosphate. Catalysis depends on for OMPdecase activity residues Asp312, Lys314, and Asp317. Orotidine 5'-phosphate is bound by residues Lys314, Asp317, Thr321, Ser372, 430 to 432 (QQY), and 450 to 451 (GR). Residues Asp317, Thr321, Ser372, 430 to 432 (QQY), and 450 to 451 (GR) each bind UMP.

In the N-terminal section; belongs to the purine/pyrimidine phosphoribosyltransferase family. It in the C-terminal section; belongs to the OMP decarboxylase family. In terms of assembly, homodimer; dimerization is required for enzymatic activity.

The enzyme catalyses orotidine 5'-phosphate + diphosphate = orotate + 5-phospho-alpha-D-ribose 1-diphosphate. It carries out the reaction orotidine 5'-phosphate + H(+) = UMP + CO2. Its pathway is pyrimidine metabolism; UMP biosynthesis via de novo pathway; UMP from orotate: step 1/2. The protein operates within pyrimidine metabolism; UMP biosynthesis via de novo pathway; UMP from orotate: step 2/2. In terms of biological role, bifunctional enzyme catalyzing the last two steps of de novo pyrimidine biosynthesis, orotate phosphoribosyltransferase (OPRT), which converts orotate to orotidine-5'-monophosphate (OMP), and orotidine-5'-monophosphate decarboxylase (ODC), the terminal enzymatic reaction that decarboxylates OMP to uridine monophosphate (UMP). This Homo sapiens (Human) protein is Uridine 5'-monophosphate synthase.